The chain runs to 206 residues: Thymidylate kinase (206 aa).

Position 11–18 (11–18 (GPEGAGKT)) interacts with ATP.

The protein belongs to the thymidylate kinase family.

The enzyme catalyses dTMP + ATP = dTDP + ADP. In terms of biological role, phosphorylation of dTMP to form dTDP in both de novo and salvage pathways of dTTP synthesis. In Deinococcus radiodurans (strain ATCC 13939 / DSM 20539 / JCM 16871 / CCUG 27074 / LMG 4051 / NBRC 15346 / NCIMB 9279 / VKM B-1422 / R1), this protein is Thymidylate kinase (tmk).